Reading from the N-terminus, the 522-residue chain is Tetratricopeptide repeat protein 39C (522 aa).

TPR repeat units lie at residues 254 to 287, 292 to 325, and 424 to 457; these read SLFM…AVDQ, HVCL…SRWS, and GLKH…ESCR.

The protein belongs to the TTC39 family.

This Rattus norvegicus (Rat) protein is Tetratricopeptide repeat protein 39C (Ttc39c).